Here is a 652-residue protein sequence, read N- to C-terminus: DNA ligase (652 aa).

NAD(+)-binding positions include D29–D33, S78–L79, and E107. The active-site N6-AMP-lysine intermediate is the K109. Residues R130, E164, K278, and K302 each contribute to the NAD(+) site. Zn(2+) is bound by residues C395, C398, C413, and C418. A BRCT domain is found at S577 to L652.

The protein belongs to the NAD-dependent DNA ligase family. LigA subfamily. Mg(2+) serves as cofactor. The cofactor is Mn(2+).

It carries out the reaction NAD(+) + (deoxyribonucleotide)n-3'-hydroxyl + 5'-phospho-(deoxyribonucleotide)m = (deoxyribonucleotide)n+m + AMP + beta-nicotinamide D-nucleotide.. Functionally, DNA ligase that catalyzes the formation of phosphodiester linkages between 5'-phosphoryl and 3'-hydroxyl groups in double-stranded DNA using NAD as a coenzyme and as the energy source for the reaction. It is essential for DNA replication and repair of damaged DNA. This is DNA ligase from Streptococcus agalactiae serotype III (strain NEM316).